Here is a 141-residue protein sequence, read N- to C-terminus: Nucleoside triphosphatase NudI (141 aa).

Residues 1-141 (MRQRTIVCPI…RLTFTQKGLL (141 aa)) form the Nudix hydrolase domain. The short motif at 38–59 (GGMEPGETMEEALRREIREELG) is the Nudix box element.

The protein belongs to the Nudix hydrolase family. NudI subfamily. In terms of assembly, monomer. Requires Mg(2+) as cofactor.

The enzyme catalyses a ribonucleoside 5'-triphosphate + H2O = a ribonucleoside 5'-phosphate + diphosphate + H(+). It carries out the reaction a 2'-deoxyribonucleoside 5'-triphosphate + H2O = a 2'-deoxyribonucleoside 5'-phosphate + diphosphate + H(+). The catalysed reaction is dUTP + H2O = dUMP + diphosphate + H(+). It catalyses the reaction dTTP + H2O = dTMP + diphosphate + H(+). The enzyme catalyses dCTP + H2O = dCMP + diphosphate + H(+). Catalyzes the hydrolysis of nucleoside triphosphates, with a preference for pyrimidine deoxynucleoside triphosphates (dUTP, dTTP and dCTP). This chain is Nucleoside triphosphatase NudI, found in Enterobacter sp. (strain 638).